We begin with the raw amino-acid sequence, 509 residues long: Aspartyl/glutamyl-tRNA(Asn/Gln) amidotransferase subunit B (509 aa).

It belongs to the GatB/GatE family. GatB subfamily. In terms of assembly, heterotrimer of A, B and C subunits.

The enzyme catalyses L-glutamyl-tRNA(Gln) + L-glutamine + ATP + H2O = L-glutaminyl-tRNA(Gln) + L-glutamate + ADP + phosphate + H(+). It carries out the reaction L-aspartyl-tRNA(Asn) + L-glutamine + ATP + H2O = L-asparaginyl-tRNA(Asn) + L-glutamate + ADP + phosphate + 2 H(+). In terms of biological role, allows the formation of correctly charged Asn-tRNA(Asn) or Gln-tRNA(Gln) through the transamidation of misacylated Asp-tRNA(Asn) or Glu-tRNA(Gln) in organisms which lack either or both of asparaginyl-tRNA or glutaminyl-tRNA synthetases. The reaction takes place in the presence of glutamine and ATP through an activated phospho-Asp-tRNA(Asn) or phospho-Glu-tRNA(Gln). This is Aspartyl/glutamyl-tRNA(Asn/Gln) amidotransferase subunit B from Mycobacterium leprae (strain Br4923).